Here is a 570-residue protein sequence, read N- to C-terminus: Nucleoprotein (570 aa).

The interval 54-241 (MRKEKRDDSD…IEPKKSAINI (188 aa)) is binding site for the cap structure m7GTP. 2 residues coordinate Mn(2+): Asp-390 and Glu-392. Zn(2+)-binding residues include Glu-400, Cys-507, His-510, and Cys-530. Asp-534 provides a ligand contact to Mn(2+).

It belongs to the arenaviridae nucleocapsid protein family. As to quaternary structure, homomultimerizes to form the nucleocapsid. Binds to viral genomic RNA. Interacts with glycoprotein G2. Interacts with protein Z; this interaction probably directs the encapsidated genome to budding sites. Interacts with protein L; this interaction does not interfere with Z-L interaction. Interacts with host IKBKE (via Protein kinase domain); the interaction inhibits IKBKE kinase activity.

It localises to the virion. It is found in the host cytoplasm. Functionally, encapsidates the genome, protecting it from nucleases. The encapsidated genomic RNA is termed the nucleocapsid (NC). Serves as template for viral transcription and replication. The increased presence of protein N in host cell does not seem to trigger the switch from transcription to replication as observed in other negative strain RNA viruses. Through the interaction with host IKBKE, strongly inhibits the phosphorylation and nuclear translocation of host IRF3, a protein involved in interferon activation pathway, leading to the inhibition of interferon-beta and IRF3-dependent promoters activation. Also encodes a functional 3'-5' exoribonuclease that degrades preferentially dsRNA substrates and thereby participates in the suppression of interferon induction. This is Nucleoprotein from Mopeia virus (MOPV).